Reading from the N-terminus, the 937-residue chain is Alanine--tRNA ligase (937 aa).

4 residues coordinate Zn(2+): His-626, His-630, Cys-727, and His-731.

This sequence belongs to the class-II aminoacyl-tRNA synthetase family. It depends on Zn(2+) as a cofactor.

The protein localises to the cytoplasm. It catalyses the reaction tRNA(Ala) + L-alanine + ATP = L-alanyl-tRNA(Ala) + AMP + diphosphate. In terms of biological role, catalyzes the attachment of alanine to tRNA(Ala) in a two-step reaction: alanine is first activated by ATP to form Ala-AMP and then transferred to the acceptor end of tRNA(Ala). Also edits incorrectly charged Ser-tRNA(Ala) and Gly-tRNA(Ala) via its editing domain. The chain is Alanine--tRNA ligase from Opitutus terrae (strain DSM 11246 / JCM 15787 / PB90-1).